Reading from the N-terminus, the 73-residue chain is Translation initiation factor IF-1 (73 aa).

Residues 1–73 (MANKEELIEF…TKGRITYRAR (73 aa)) form the S1-like domain.

Belongs to the IF-1 family. Component of the 30S ribosomal translation pre-initiation complex which assembles on the 30S ribosome in the order IF-2 and IF-3, IF-1 and N-formylmethionyl-tRNA(fMet); mRNA recruitment can occur at any time during PIC assembly.

The protein localises to the cytoplasm. One of the essential components for the initiation of protein synthesis. Stabilizes the binding of IF-2 and IF-3 on the 30S subunit to which N-formylmethionyl-tRNA(fMet) subsequently binds. Helps modulate mRNA selection, yielding the 30S pre-initiation complex (PIC). Upon addition of the 50S ribosomal subunit IF-1, IF-2 and IF-3 are released leaving the mature 70S translation initiation complex. The polypeptide is Translation initiation factor IF-1 (Acinetobacter baumannii (strain ATCC 17978 / DSM 105126 / CIP 53.77 / LMG 1025 / NCDC KC755 / 5377)).